Reading from the N-terminus, the 273-residue chain is Large ribosomal subunit protein uL2 (273 aa).

Disordered regions lie at residues 28–53 (KPFAPLLEKNSKSGGRNNNGRITTRH) and 221–273 (RGTA…RRSK). Low complexity predominate over residues 39–48 (KSGGRNNNGR). K242 carries the N6-acetyllysine modification.

It belongs to the universal ribosomal protein uL2 family. As to quaternary structure, part of the 50S ribosomal subunit. Forms a bridge to the 30S subunit in the 70S ribosome.

Functionally, one of the primary rRNA binding proteins. Required for association of the 30S and 50S subunits to form the 70S ribosome, for tRNA binding and peptide bond formation. It has been suggested to have peptidyltransferase activity; this is somewhat controversial. Makes several contacts with the 16S rRNA in the 70S ribosome. The polypeptide is Large ribosomal subunit protein uL2 (Escherichia coli (strain SE11)).